The sequence spans 518 residues: Chromosomal replication initiator protein DnaA (518 aa).

The tract at residues 1–73 is domain I, interacts with DnaA modulators; the sequence is MTLAEFWPLC…REELAAGRPA (73 aa). The domain II stretch occupies residues 73 to 180; it reads AFVFKPGEGV…DAEEARYEQT (108 aa). The interval 144–180 is disordered; the sequence is HEPRQAAGPASRPESAAVAKARTDAQRDAEEARYEQT. Residues 164-177 show a composition bias toward basic and acidic residues; sequence ARTDAQRDAEEARY. The domain III, AAA+ region stretch occupies residues 181 to 397; that stretch reads NLSPDYTFDT…GAFNRVGASS (217 aa). Residues glycine 225, glycine 227, lysine 228, and threonine 229 each contribute to the ATP site. Positions 398–518 are domain IV, binds dsDNA; the sequence is RFMNRPVIDI…YEKLLILIQN (121 aa).

This sequence belongs to the DnaA family. As to quaternary structure, oligomerizes as a right-handed, spiral filament on DNA at oriC.

It is found in the cytoplasm. In terms of biological role, plays an essential role in the initiation and regulation of chromosomal replication. ATP-DnaA binds to the origin of replication (oriC) to initiate formation of the DNA replication initiation complex once per cell cycle. Binds the DnaA box (a 9 base pair repeat at the origin) and separates the double-stranded (ds)DNA. Forms a right-handed helical filament on oriC DNA; dsDNA binds to the exterior of the filament while single-stranded (ss)DNA is stabiized in the filament's interior. The ATP-DnaA-oriC complex binds and stabilizes one strand of the AT-rich DNA unwinding element (DUE), permitting loading of DNA polymerase. After initiation quickly degrades to an ADP-DnaA complex that is not apt for DNA replication. Binds acidic phospholipids. This chain is Chromosomal replication initiator protein DnaA, found in Neisseria gonorrhoeae (strain ATCC 700825 / FA 1090).